The following is a 104-amino-acid chain: Replication restart protein PriB (104 aa).

The SSB domain occupies 1-101 (MTNRLALSGT…LHAEQIELID (101 aa)).

The protein belongs to the PriB family. As to quaternary structure, homodimer. Interacts with PriA and DnaT. Component of the replication restart primosome. Primosome assembly occurs via a 'hand-off' mechanism. PriA binds to replication forks, subsequently PriB then DnaT bind; DnaT then displaces ssDNA to generate the helicase loading substrate.

Its function is as follows. Involved in the restart of stalled replication forks, which reloads the replicative helicase on sites other than the origin of replication; the PriA-PriB pathway is the major replication restart pathway. During primosome assembly it facilitates complex formation between PriA and DnaT on DNA; stabilizes PriA on DNA. Stimulates the DNA unwinding activity of PriA helicase. The chain is Replication restart protein PriB from Citrobacter koseri (strain ATCC BAA-895 / CDC 4225-83 / SGSC4696).